The following is a 190-amino-acid chain: Dynactin subunit 6 (190 aa).

A Phosphothreonine modification is found at T186.

It belongs to the dynactin subunits 5/6 family. Dynactin subunit 6 subfamily. In terms of assembly, subunit of dynactin, a multiprotein complex part of a tripartite complex with dynein and a adapter, such as BICDL1, BICD2 or HOOK3. The dynactin complex is built around ACTR1A/ACTB filament and consists of an actin-related filament composed of a shoulder domain, a pointed end and a barbed end. Its length is defined by its flexible shoulder domain. The soulder is composed of 2 DCTN1 subunits, 4 DCTN2 and 2 DCTN3. The 4 DCNT2 (via N-terminus) bind the ACTR1A filament and act as molecular rulers to determine the length. The pointed end is important for binding dynein-dynactin cargo adapters. Consists of 4 subunits: ACTR10, DCNT4, DCTN5 and DCTN6. Within the complex DCTN6 forms a heterodimer with DCTN5. The barbed end is composed of a CAPZA1:CAPZB heterodimers, which binds ACTR1A/ACTB filament and dynactin and stabilizes dynactin. Interacts with PLK1. Interacts with N4BP2L1. Post-translationally, phosphorylation at Thr-186 by CDK1 during mitotic prometaphase creates a binding site for PLK1 that facilitates its recruitment to kinetochores.

It localises to the cytoplasm. It is found in the cytoskeleton. Its subcellular location is the chromosome. The protein resides in the centromere. The protein localises to the kinetochore. Its function is as follows. Part of the dynactin complex that activates the molecular motor dynein for ultra-processive transport along microtubules. This is Dynactin subunit 6 (DCTN6) from Sus scrofa (Pig).